The primary structure comprises 422 residues: Protein phosphatase methylesterase 1 (422 aa).

Residues M1–S27 are disordered. Residues S207, D234, and H371 contribute to the active site.

The protein belongs to the AB hydrolase superfamily.

It catalyses the reaction [phosphatase 2A protein]-C-terminal L-leucine methyl ester + H2O = [phosphatase 2A protein]-C-terminal L-leucine + methanol + H(+). Functionally, demethylates proteins that have been reversibly carboxymethylated. Demethylates the phosphatase PP2A catalytic subunit. This is Protein phosphatase methylesterase 1 (PPE1) from Cryptococcus neoformans var. neoformans serotype D (strain JEC21 / ATCC MYA-565) (Filobasidiella neoformans).